We begin with the raw amino-acid sequence, 139 residues long: Trafficking protein particle complex subunit 2-like protein (139 aa).

It belongs to the TRAPP small subunits family. Sedlin subfamily.

The protein resides in the cytoplasm. It is found in the perinuclear region. The protein localises to the endoplasmic reticulum. It localises to the golgi apparatus. Functionally, may play a role in vesicular transport from endoplasmic reticulum to Golgi. The chain is Trafficking protein particle complex subunit 2-like protein (TRAPPC2L) from Taeniopygia guttata (Zebra finch).